The chain runs to 63 residues: Short neurotoxin 2 (63 aa).

4 disulfide bridges follow: Cys3–Cys21, Cys15–Cys39, Cys43–Cys49, and Cys50–Cys55.

It belongs to the three-finger toxin family. Short-chain subfamily. Orphan group XVIII sub-subfamily. In terms of tissue distribution, expressed by the venom gland.

The protein resides in the secreted. In terms of biological role, blocks both the muscle-twitch response to nerve stimulation and the response to exogenous acetylcholine. In Bungarus fasciatus (Banded krait), this protein is Short neurotoxin 2.